The primary structure comprises 382 residues: Secreted triacylglycerol lipase LIP5 (382 aa).

An intrachain disulfide couples cysteine 40 to cysteine 211. An N-linked (GlcNAc...) asparagine glycan is attached at asparagine 115. Catalysis depends on serine 124, which acts as the Nucleophile. N-linked (GlcNAc...) asparagine glycosylation is found at asparagine 157 and asparagine 232. Active-site residues include aspartate 271 and histidine 305. Asparagine 346 carries an N-linked (GlcNAc...) asparagine glycan.

Belongs to the AB hydrolase superfamily. Lipase family. Class Lip subfamily.

It localises to the secreted. It carries out the reaction a triacylglycerol + H2O = a diacylglycerol + a fatty acid + H(+). It catalyses the reaction a monoacylglycerol + H2O = glycerol + a fatty acid + H(+). The enzyme catalyses a diacylglycerol + H2O = a monoacylglycerol + a fatty acid + H(+). In terms of biological role, secreted lipase that hydrolyzes acylglycerol lipids such as triacylglycerols and consequently releases free fatty acid. Can hydrolyze 4-nitrophenyl palmitate to release 4-nitrophenol and palmitoic acid. Due to an absence of fatty acid synthase genes in Malassezia species, secretory lipases are essential for the yeast to generate free fatty acids from degradation of sebum and assimilate them as lipid sources for growth. Plays important roles not only in lipid metabolism but also in the immune response of host cells and pathogenesis. The polypeptide is Secreted triacylglycerol lipase LIP5 (Malassezia furfur (Pityriasis versicolor infection agent)).